The chain runs to 94 residues: MILFPSVDKLLERVDSRYSLIMLASKRAHEIDKYRIDKWRAAHPDKAGETVSLEGDKPLLLDHYDSNKSVGMALEEIEAGLVTIDPDQHEDLQD.

It belongs to the RNA polymerase subunit omega family. As to quaternary structure, the RNAP catalytic core consists of 2 alpha, 1 beta, 1 beta' and 1 omega subunit. When a sigma factor is associated with the core the holoenzyme is formed, which can initiate transcription.

The enzyme catalyses RNA(n) + a ribonucleoside 5'-triphosphate = RNA(n+1) + diphosphate. Functionally, promotes RNA polymerase assembly. Latches the N- and C-terminal regions of the beta' subunit thereby facilitating its interaction with the beta and alpha subunits. This chain is DNA-directed RNA polymerase subunit omega, found in Limosilactobacillus fermentum (strain NBRC 3956 / LMG 18251) (Lactobacillus fermentum).